The chain runs to 224 residues: Uridylate kinase (224 aa).

9–10 (GS) provides a ligand contact to ATP. Glycine 43 provides a ligand contact to UMP. Residues glycine 44 and arginine 48 each contribute to the ATP site. UMP contacts are provided by residues aspartate 65 and 113-119 (TEPAHST). Residues threonine 139, tyrosine 145, and aspartate 148 each contribute to the ATP site.

Belongs to the UMP kinase family. In terms of assembly, homohexamer.

It is found in the cytoplasm. It carries out the reaction UMP + ATP = UDP + ADP. It participates in pyrimidine metabolism; CTP biosynthesis via de novo pathway; UDP from UMP (UMPK route): step 1/1. Inhibited by UTP. Functionally, catalyzes the reversible phosphorylation of UMP to UDP. The sequence is that of Uridylate kinase from Methanothermobacter thermautotrophicus (strain ATCC 29096 / DSM 1053 / JCM 10044 / NBRC 100330 / Delta H) (Methanobacterium thermoautotrophicum).